The chain runs to 369 residues: Glycolate oxidase 1 (369 aa).

The FMN hydroxy acid dehydrogenase domain maps to 1–360 (MGEITNVMEY…TRKHIITESD (360 aa)). A glyoxylate-binding site is contributed by tyrosine 25. FMN contacts are provided by residues 78 to 80 (PTA), serine 107, 128 to 130 (QLY), and threonine 156. Tyrosine 130 provides a ligand contact to glyoxylate. Arginine 165 is a glyoxylate binding site. The FMN site is built by lysine 231 and serine 253. Residues histidine 255 and arginine 258 each coordinate glyoxylate. Histidine 255 serves as the catalytic Proton acceptor. FMN-binding positions include 286–290 (DGGVR) and 309–310 (GR).

Belongs to the FMN-dependent alpha-hydroxy acid dehydrogenase family. As to quaternary structure, homotetramer. FMN is required as a cofactor.

The protein localises to the peroxisome. The enzyme catalyses glycolate + O2 = glyoxylate + H2O2. It functions in the pathway photosynthesis; photorespiration; glycine from 2-phosphoglycolate: step 2/3. Catalyzes the oxidation of glycolate to glyoxylate, with a reduction of O2 to H2O2. Is an essential enzyme in photorespiration in plants. Photorespiration plays a vital role in C4 photosynthesis in Z.mays and is essential for maize seedling development and maintaining low (non-toxic) levels of glycolate. This chain is Glycolate oxidase 1, found in Zea mays (Maize).